A 381-amino-acid chain; its full sequence is MSKRDYYEVLGIERGADQKEIKKAYRRLAQKYHPDRNPDDDTAAEKFREVSEAYEVLTDEEKRSAYDQFGHAGVDGQAGGGFGGGGFGGGAGGFSDIFGDVFGDIFGGGGRRNPNAPQRGSDLRYNLELDLEDAVAGTTVDIRVPRHIECEHCDGDGAEPGSTKETCPTCHGQGQVRMQQGFFAVQQTCPTCHGAGQTIKVPCRKCHGEGRVRETRTLSVKIPAGVDTGDRIRLNNEGEAGLNGGPPGDLYVQAAIKPHPIFERDGRHLQCEVPINFIDATLGGELEVPTLDGRVKLKIPPETQTGKMFRLKGKGVKPVRGGPPGDLLCKVVLETPVNLSDEQKDLLRQFQDSLDGSNSHHSPKKTSFFDGVKKFFEDMKP.

Residues 5 to 70 (DYYEVLGIER…EKRSAYDQFG (66 aa)) enclose the J domain. The segment at 137–215 (GTTVDIRVPR…CHGEGRVRET (79 aa)) adopts a CR-type zinc-finger fold. C150, C153, C167, C170, C189, C192, C203, and C206 together coordinate Zn(2+). 4 CXXCXGXG motif repeats span residues 150–157 (CEHCDGDG), 167–174 (CPTCHGQG), 189–196 (CPTCHGAG), and 203–210 (CRKCHGEG).

This sequence belongs to the DnaJ family. As to quaternary structure, homodimer. Zn(2+) serves as cofactor.

It localises to the cytoplasm. Functionally, participates actively in the response to hyperosmotic and heat shock by preventing the aggregation of stress-denatured proteins and by disaggregating proteins, also in an autonomous, DnaK-independent fashion. Unfolded proteins bind initially to DnaJ; upon interaction with the DnaJ-bound protein, DnaK hydrolyzes its bound ATP, resulting in the formation of a stable complex. GrpE releases ADP from DnaK; ATP binding to DnaK triggers the release of the substrate protein, thus completing the reaction cycle. Several rounds of ATP-dependent interactions between DnaJ, DnaK and GrpE are required for fully efficient folding. Also involved, together with DnaK and GrpE, in the DNA replication of plasmids through activation of initiation proteins. The polypeptide is Chaperone protein DnaJ (Chromohalobacter salexigens (strain ATCC BAA-138 / DSM 3043 / CIP 106854 / NCIMB 13768 / 1H11)).